Consider the following 713-residue polypeptide: Leucine-rich repeat-containing protein 4B (713 aa).

The first 35 residues, 1–35, serve as a signal peptide directing secretion; it reads MARARGSPCPPLPPGRMSWPHGALLFLWLFSPPLG. The Extracellular portion of the chain corresponds to 36 to 576; sequence AGGGGVAVTS…DLDDVMKTTK (541 aa). Residues 48–86 enclose the LRRNT domain; it reads GGGSPPATSCPVACSCSNQASRVICTRRDLAEVPASIPV. LRR repeat units lie at residues 87 to 108, 111 to 132, 135 to 156, 159 to 180, 183 to 205, 208 to 229, 230 to 251, 254 to 275, and 278 to 299; these read NTRYLNLQENGIQVIRTDTFKH, HLEILQLSKNLVRKIEVGAFNG, SLNTLELFDNRLTTVPTQAFEY, KLRELWLRNNPIESIPSYAFNR, SLRRLDLGELKRLEYISEAAFEG, NLRYLNLGMCNLKDIPNLTALV, RLEELELSGNRLDLIRPGSFQG, SLRKLWLMHAQVATIERNAFDD, and SLEELNLSHNNLMSLPHDLFTP. Residue Asn224 is glycosylated (N-linked (GlcNAc...) asparagine). Residues Asn283, Asn333, Asn374, Asn400, Asn422, Asn425, Asn444, and Asn452 are each glycosylated (N-linked (GlcNAc...) asparagine). The region spanning 311-363 is the LRRCT domain; sequence NPWHCNCDVLWLSWWLKETVPSNTTCCARCHAPAGLKGRYIGELDQSHFTCYA. Residues 364 to 452 enclose the Ig-like C2-type domain; sequence PVIVEPPTDL…GNTTASATLN (89 aa). Cys385 and Cys436 are disulfide-bonded. A disordered region spans residues 497–551; that stretch reads TQPGEEALQPRGTEKEPPGPTTDGVWGGGRPGDAAGPASSSTTAPAPRSSRPTEK. Low complexity predominate over residues 528 to 546; the sequence is GDAAGPASSSTTAPAPRSS. A helical membrane pass occupies residues 577-597; it reads IIIGCFVAITFMAAVMLVAFY. Over 598–713 the chain is Cytoplasmic; the sequence is KLRKQHQLHK…SKENVQETQI (116 aa). Ser693 is modified (phosphoserine). Positions 694–713 are disordered; the sequence is IHEPLLFKSGSKENVQETQI. A compositionally biased stretch (basic and acidic residues) spans 703–713; sequence GSKENVQETQI.

Interacts with PTPRF. Interacts with DLG4. Post-translationally, N-glycosylated. O-glycosylated; contains sialic acid.

Its subcellular location is the membrane. It is found in the presynaptic cell membrane. Functionally, synaptic adhesion protein. Regulates the formation of excitatory synapses. The trans-synaptic adhesion between LRRC4B and PTPRF regulates the formation of excitatory synapses in a bidirectional manner. The polypeptide is Leucine-rich repeat-containing protein 4B (LRRC4B) (Homo sapiens (Human)).